A 262-amino-acid chain; its full sequence is Ribose-5-phosphate isomerase A (262 aa).

Residues 33–36 (TGST), 89–92 (DGAD), and 102–105 (KGGG) contribute to the substrate site. The Proton acceptor role is filled by E111. K129 is a binding site for substrate.

The protein belongs to the ribose 5-phosphate isomerase family. Homodimer.

The catalysed reaction is aldehydo-D-ribose 5-phosphate = D-ribulose 5-phosphate. It participates in carbohydrate degradation; pentose phosphate pathway; D-ribose 5-phosphate from D-ribulose 5-phosphate (non-oxidative stage): step 1/1. In terms of biological role, catalyzes the reversible conversion of ribose-5-phosphate to ribulose 5-phosphate. This Cereibacter sphaeroides (strain ATCC 17029 / ATH 2.4.9) (Rhodobacter sphaeroides) protein is Ribose-5-phosphate isomerase A.